A 267-amino-acid chain; its full sequence is tRNA (guanine-N(1)-)-methyltransferase (267 aa).

Residues Gly-112 and 131–136 contribute to the S-adenosyl-L-methionine site; that span reads IGDYIL. Positions 245–259 are enriched in basic and acidic residues; the sequence is DRRKEKNSYEDEFNR. The tract at residues 245-267 is disordered; sequence DRRKEKNSYEDEFNRRNYKRSTS.

This sequence belongs to the RNA methyltransferase TrmD family. As to quaternary structure, homodimer.

The protein resides in the cytoplasm. It carries out the reaction guanosine(37) in tRNA + S-adenosyl-L-methionine = N(1)-methylguanosine(37) in tRNA + S-adenosyl-L-homocysteine + H(+). Functionally, specifically methylates guanosine-37 in various tRNAs. This Spiroplasma kunkelii protein is tRNA (guanine-N(1)-)-methyltransferase.